Consider the following 153-residue polypeptide: Small ribosomal subunit protein uS13 (153 aa).

The interval 134 to 153 (GQRTKSNGRRGRSMGVSRKK) is disordered.

The protein belongs to the universal ribosomal protein uS13 family.

Its subcellular location is the cytoplasm. Located at the top of the head of the 40S subunit, it contacts several helices of the 18S rRNA. The protein is Small ribosomal subunit protein uS13 (RPS18) of Encephalitozoon cuniculi (strain GB-M1) (Microsporidian parasite).